The primary structure comprises 110 residues: Disintegrin jerdostatin (110 aa).

Residues Met1–Ser20 form the signal peptide. A propeptide spanning residues Lys21 to Leu67 is cleaved from the precursor. The 84-residue stretch at Ser27 to Gly110 folds into the Disintegrin domain. 4 cysteine pairs are disulfide-bonded: Cys68–Cys77, Cys73–Cys96, Cys74–Cys101, and Cys86–Cys103. The short motif at Arg88–Ser90 is the Cell attachment site; atypical (RTS) element.

Belongs to the disintegrin family. Short disintegrin subfamily. Monomer. Post-translationally, two conformers are found, they may differ by their disulfide bond connectivities. Conformer 2 is 33 times less active than conformer 1. Conformer 2 may represent a non-native protein. In terms of processing, the C-terminal dipeptide may be post-translationally removed, as seen in disintegrins that possess a KTS integrin-binding motif. As to expression, expressed by the venom gland.

The protein resides in the secreted. Recombinant protein inhibits the adhesion of alpha-1/beta-1-K562 (ITGA1/ITGB1) cells to collagen IV with an IC(50) of 80 nM. The protein is Disintegrin jerdostatin of Protobothrops jerdonii (Jerdon's pitviper).